Reading from the N-terminus, the 197-residue chain is Protein GrpE (197 aa).

The segment at 1-39 is disordered; sequence MSSKEQKTPEGQAPEEIIMDQHEEIEAVEPEASAEQVDP.

This sequence belongs to the GrpE family. Homodimer.

It localises to the cytoplasm. Functionally, participates actively in the response to hyperosmotic and heat shock by preventing the aggregation of stress-denatured proteins, in association with DnaK and GrpE. It is the nucleotide exchange factor for DnaK and may function as a thermosensor. Unfolded proteins bind initially to DnaJ; upon interaction with the DnaJ-bound protein, DnaK hydrolyzes its bound ATP, resulting in the formation of a stable complex. GrpE releases ADP from DnaK; ATP binding to DnaK triggers the release of the substrate protein, thus completing the reaction cycle. Several rounds of ATP-dependent interactions between DnaJ, DnaK and GrpE are required for fully efficient folding. This chain is Protein GrpE, found in Escherichia coli O157:H7 (strain EC4115 / EHEC).